The following is a 453-amino-acid chain: Membrane-bound acylglycerophosphatidylinositol O-acyltransferase mboa-7 (453 aa).

Transmembrane regions (helical) follow at residues 4–24 (ILGL…FSFG), 36–56 (ILAS…PKIV), 79–99 (LYVF…HYIL), 154–174 (AYFY…QMLI), 195–215 (VRLL…PLDI), 220–240 (AIWE…FVVF), and 244–264 (VYSA…GIYP). N-linked (GlcNAc...) asparagine glycosylation is present at asparagine 319. Histidine 350 is an active-site residue. A run of 2 helical transmembrane segments spans residues 354–374 (AGYF…DVIF) and 421–441 (FWSS…IYSA).

This sequence belongs to the membrane-bound acyltransferase family. As to expression, expressed ubiquitously throughout development from early embryo to larval and adult stages. In adults, strongly expressed in pharyngeal muscle, body wall muscle, vulval cells, distal tip cells, intestinal cells and spermatheca.

Its subcellular location is the membrane. The enzyme catalyses 1-octadecanoyl-sn-glycero-3-phospho-(1D-myo-inositol) + (5Z,8Z,11Z,14Z,17Z)-eicosapentaenoyl-CoA = 1-octadecanoyl-2-(5Z,8Z,11Z,14Z,17Z-eicosapentaenoyl)-sn-glycero-3-phospho-(1D-myo-inositol) + CoA. It catalyses the reaction a 1-acyl-sn-glycero-3-phospho-(1D-myo-inositol) + (5Z,8Z,11Z,14Z,17Z)-eicosapentaenoyl-CoA = a 1-acyl-2-(5Z,8Z,11Z,14Z,17Z-eicosapentaenoyl)-sn-glycero-3-phospho-(1D-myo-inositol) + CoA. It carries out the reaction a 1-acyl-sn-glycero-3-phospho-(1D-myo-inositol) + (5Z,8Z,11Z,14Z)-eicosatetraenoyl-CoA = a 1-acyl-2-(5Z,8Z,11Z,14Z-eicosatetraenoyl)-sn-glycero-3-phospho-(1D-myo-inositol) + CoA. The protein operates within lipid metabolism; phospholipid metabolism. Functionally, acyltransferase which mediates the conversion of lysophosphatidylinositol (1-acyl-sn-glycero-3-phosphatidylinositol or LPI) into phosphatidylinositol (1,2-diacyl-sn-glycero-3-phosphoinositol or PI) (LPIAT activity). Prefers sn-2-LPI rather than sn-1-LPI as the acyl acceptor. Lysophospholipid acyltransferases (LPLATs) catalyze the reacylation step of the phospholipid remodeling pathway also known as the Lands cycle. Involved in the selective incorporation of arachidonoyl-CoA ((5Z,8Z,11Z,14Z)-eicosatetraenoyl-CoA) and (5Z,8Z,11Z,14Z,17Z)-eicosapentaenoyl-CoA (EPA-CoA) into PI. Besides its role in biomembranes, PI is a precursor of PI 3-phosphate (PIP3) and its fatty acid composition has an important role in PI3P signaling. The chain is Membrane-bound acylglycerophosphatidylinositol O-acyltransferase mboa-7 from Caenorhabditis elegans.